The chain runs to 141 residues: Nucleoside diphosphate kinase (141 aa).

ATP contacts are provided by K11, F59, R87, T93, R104, and N114. Catalysis depends on H117, which acts as the Pros-phosphohistidine intermediate.

It belongs to the NDK family. Homotetramer. Mg(2+) is required as a cofactor.

The protein localises to the cytoplasm. The catalysed reaction is a 2'-deoxyribonucleoside 5'-diphosphate + ATP = a 2'-deoxyribonucleoside 5'-triphosphate + ADP. The enzyme catalyses a ribonucleoside 5'-diphosphate + ATP = a ribonucleoside 5'-triphosphate + ADP. In terms of biological role, major role in the synthesis of nucleoside triphosphates other than ATP. The ATP gamma phosphate is transferred to the NDP beta phosphate via a ping-pong mechanism, using a phosphorylated active-site intermediate. The sequence is that of Nucleoside diphosphate kinase from Serratia proteamaculans (strain 568).